The primary structure comprises 518 residues: MAGRKSSRTTGEPVKKAERKSAILSPHDELRERLLETSLDVKENIPERSSSTRNESVGSQRSDCSESRKRRSTEKGPVAKRPSTEKKGNGSRDDSFSSVFSEDRETESSVGSTSSRTRGQPLPAMPEEEESLDGSSDHNAESEESRETPQSDEHDGFEEDGDVEDDVSSDVNDEEDEYDEYEEDEETEDEFDLPLQNDDFAVTKRLMNDRHMIDAPSLLSYGKCEGIGSPTKVWSLMVKRDDIPRATRQLLRNHPDMTINMRRVLVDWMMECCDVEKLHRETFHLAVDYADRFLESTREEVISENFQLVGTAALFIAAKYEEIYPPKCADLAALTDGAFSCDDICRMESIVAKDLKWSFGPITSVQWLSTYLQLLGTGKKNNDHFEEGNMYIPELLRSEYLRMVRILDYLLSDIDSFNFSYRTIAAAVLFVNYDPRSAVEKATGFIYEQLRNVIDYVTPICRAYDRFTQEHVPKDIIPDYAPAEDAHNIQVHIKHYEVDPYVEKERERRHRRGPNRRL.

The tract at residues Met1–Leu193 is disordered. Over residues Pro13–Pro46 the composition is skewed to basic and acidic residues. Positions Glu47–Ser62 are enriched in polar residues. Basic and acidic residues predominate over residues Pro82–Glu107. Positions Ser108–Gly119 are enriched in low complexity. Residues Ser135–His154 are compositionally biased toward basic and acidic residues. The segment covering Asp155–Asp192 has biased composition (acidic residues).

The protein belongs to the cyclin family. Cyclin E subfamily. Interacts with a member of the CDK2/CDK protein kinases to form a serine/threonine kinase holoenzyme complex. The cyclin subunit imparts substrate specificity to the complex.

It localises to the nucleus. The protein localises to the cytoplasm. The protein resides in the cytoskeleton. It is found in the microtubule organizing center. Its subcellular location is the centrosome. It localises to the centriole. Functionally, essential for the control of the cell cycle at the G1/S (start) transition. In association with cdk-2, regulates proliferation, quiescent state and cell fate during the development of several cell lineages. In the embryo, initiates the establishment of cell polarity through the recruitment of the centrosomal proteins spd-2 and spd-5 during prophase. During the development of the vulva, controls the onset of vulval cell terminal differentiation by controlling the duration of G1 phase. During hypoderm development at early larval stages, controls syncytial fate of seam cell daughter cells. Involved in the progression of cell division in the intestinal lineage in larvae, and in particular in endoreplication, a specific growth pathway in the intestinal epithelium, required for feeding and gut development in growing larvae. By controlling the activity of translational repressor gld-1, regulates the pool of germline stem cells and the size of the mitotic zone by preventing entry into meiosis. In addition, repression of expression by gld-1 prevents mitosis re-entry in meiotic germline cells. The protein is G1/S-specific cyclin-E (cye-1) of Caenorhabditis briggsae.